Consider the following 694-residue polypeptide: DNA polymerase eta (694 aa).

The region spanning 9–258 (VALVDMDCFF…MPIRKIRSLG (250 aa)) is the UmuC domain. Mg(2+) is bound by residues Asp13 and Met14. Residues Asp13 and Met14 each coordinate Mn(2+). A 2'-deoxyribonucleoside 5'-triphosphate is bound at residue Arg61. Mg(2+) is bound by residues Asp115 and Glu116. Mn(2+)-binding residues include Asp115 and Glu116. Glu116 is an active-site residue. Positions 565-598 (DSGPDDGAVKPVSSKAVSTEMNVAGDSPNVLDSP) are disordered. Residues 609–643 (ATEDQVLCEKCDSLVPVWDMPEHTDYHFALELQKS) form a UBZ3-type zinc finger. Residues Cys616, Cys619, His631, and His635 each contribute to the Zn(2+) site. Residues 651-694 (KPQAIPAVSPQGKRNPKSPSASSSKRLRPHGMQTLESFFKPLTH) form a disordered region. Residues Lys663, Lys667, and Lys675 each participate in a glycyl lysine isopeptide (Lys-Gly) (interchain with G-Cter in ubiquitin) cross-link. Positions 682-689 (MQTLESFF) match the PIP-box motif. Residue Lys690 forms a Glycyl lysine isopeptide (Lys-Gly) (interchain with G-Cter in ubiquitin) linkage.

Belongs to the DNA polymerase type-Y family. Interacts with REV1. Interacts with monoubiquitinated PCNA, but not unmodified PCNA. Interacts with POLI; this interaction targets POLI to the replication machinery. Interacts with PALB2 and BRCA2; the interactions are direct and are required to sustain the recruitment of POLH at blocked replication forks and to stimulate POLH-dependent DNA synthesis on D loop substrates. Interacts (via C-terminus) with TRAIP. Interacts with ubiquitin. Interacts with POLDIP2. Requires Mg(2+) as cofactor. It depends on Mn(2+) as a cofactor. Post-translationally, monoubiquitinated by RCHY1/PIRH2. Ubiquitination depends on integrity of the UBZ3-type zinc finger domain and is enhanced by TRAIP. Ubiquitination inhibits the ability of PolH to interact with PCNA and to bypass UV-induced lesions. In terms of tissue distribution, ubiquitous.

The protein localises to the nucleus. It carries out the reaction DNA(n) + a 2'-deoxyribonucleoside 5'-triphosphate = DNA(n+1) + diphosphate. With respect to regulation, the enzyme in complex with the DNA substrate binds a third divalent metal cation. The binding of this third divalent cation, which is coordinated by water molecules and two oxygen atoms from DNA and dNTP, is essential for catalyzing the DNA synthesis. Its function is as follows. DNA polymerase specifically involved in the DNA repair by translesion synthesis (TLS). Due to low processivity on both damaged and normal DNA, cooperates with the heterotetrameric (REV3L, REV7, POLD2 and POLD3) POLZ complex for complete bypass of DNA lesions. Inserts one or 2 nucleotide(s) opposite the lesion, the primer is further extended by the tetrameric POLZ complex. In the case of 1,2-intrastrand d(GpG)-cisplatin cross-link, inserts dCTP opposite the 3' guanine. Particularly important for the repair of UV-induced pyrimidine dimers. Although inserts the correct base, may cause base transitions and transversions depending upon the context. May play a role in hypermutation at immunoglobulin genes. Forms a Schiff base with 5'-deoxyribose phosphate at abasic sites, but does not have any lyase activity, preventing the release of the 5'-deoxyribose phosphate (5'-dRP) residue. This covalent trapping of the enzyme by the 5'-dRP residue inhibits its DNA synthetic activity during base excision repair, thereby avoiding high incidence of mutagenesis. Targets POLI to replication foci. The polypeptide is DNA polymerase eta (Polh) (Mus musculus (Mouse)).